A 418-amino-acid polypeptide reads, in one-letter code: Light-independent protochlorophyllide reductase subunit N (418 aa).

[4Fe-4S] cluster-binding residues include C17, C42, and C103.

This sequence belongs to the BchN/ChlN family. As to quaternary structure, protochlorophyllide reductase is composed of three subunits; ChlL, ChlN and ChlB. Forms a heterotetramer of two ChlB and two ChlN subunits. [4Fe-4S] cluster is required as a cofactor.

It carries out the reaction chlorophyllide a + oxidized 2[4Fe-4S]-[ferredoxin] + 2 ADP + 2 phosphate = protochlorophyllide a + reduced 2[4Fe-4S]-[ferredoxin] + 2 ATP + 2 H2O. It participates in porphyrin-containing compound metabolism; chlorophyll biosynthesis (light-independent). Its function is as follows. Component of the dark-operative protochlorophyllide reductase (DPOR) that uses Mg-ATP and reduced ferredoxin to reduce ring D of protochlorophyllide (Pchlide) to form chlorophyllide a (Chlide). This reaction is light-independent. The NB-protein (ChlN-ChlB) is the catalytic component of the complex. In Prochlorococcus marinus (strain MIT 9313), this protein is Light-independent protochlorophyllide reductase subunit N.